Here is a 151-residue protein sequence, read N- to C-terminus: Large ribosomal subunit protein bL9 (151 aa).

This sequence belongs to the bacterial ribosomal protein bL9 family.

Functionally, binds to the 23S rRNA. This Chloroherpeton thalassium (strain ATCC 35110 / GB-78) protein is Large ribosomal subunit protein bL9.